Reading from the N-terminus, the 189-residue chain is MAAGTTSDLRNGIVIRYNNDLYQVVEFQHVAPGNWRAFVRMKLKSLTTGKVIEDRVRAGAEIDIVRIERRPMQYLYREGDSFVFMDNDTFDQIPVSAELVGDAVKFMKENETVDLVYDAEKDQIIGVELPIFVNLKVVETTVAVRGDTATNVTKPATLETGAVIEVPAFINEGDVLKIDTRTGEYITRV.

This sequence belongs to the elongation factor P family.

It is found in the cytoplasm. The protein operates within protein biosynthesis; polypeptide chain elongation. In terms of biological role, involved in peptide bond synthesis. Stimulates efficient translation and peptide-bond synthesis on native or reconstituted 70S ribosomes in vitro. Probably functions indirectly by altering the affinity of the ribosome for aminoacyl-tRNA, thus increasing their reactivity as acceptors for peptidyl transferase. The polypeptide is Elongation factor P (Chloroflexus aggregans (strain MD-66 / DSM 9485)).